A 431-amino-acid polypeptide reads, in one-letter code: Forkhead box protein N2 (431 aa).

Positions 112–208 (KPPYSFSLLI…QALKKQPFSS (97 aa)) form a DNA-binding region, fork-head. Residues 364–387 (DSGYASQPCAKISEKGQSGKKMRK) are disordered.

It localises to the nucleus. Binds to the purine-rich region in HTLV-I LTR. The protein is Forkhead box protein N2 (FOXN2) of Homo sapiens (Human).